A 99-amino-acid chain; its full sequence is CLAVATA3/ESR (CLE)-related protein 17 (99 aa).

Residues M1–M21 form the signal peptide. The segment covering L77–V89 has biased composition (basic and acidic residues). Residues L77 to N99 are disordered. P94 carries the post-translational modification Hydroxyproline. P94 carries O-linked (Ara...) hydroxyproline glycosylation.

Belongs to the CLV3/ESR signal peptide family. The O-glycosylation (arabinosylation) of the hydroxyproline Pro-94 enhances binding affinity of the CLE17p peptide for its receptor. Mostly expressed in seedlings, roots, flowers, stems and apex, and, to a lower extent, in leaves and siliques.

It localises to the secreted. The protein localises to the extracellular space. In terms of biological role, extracellular signal peptide that regulates cell fate. Represses root apical meristem maintenance. Regulates the transition of protophloem cells from proliferation to differentiation, thus impinging on postembryonic growth capacity of the root meristem; this signaling pathway requires CRN and CLV2. This is CLAVATA3/ESR (CLE)-related protein 17 from Arabidopsis thaliana (Mouse-ear cress).